The sequence spans 684 residues: Gabija protein GajB (684 aa).

One can recognise a UvrD-like helicase ATP-binding domain in the interval glutamate 14–aspartate 351. Residue serine 35–threonine 42 coordinates ATP.

Belongs to the helicase family. As to quaternary structure, homodimer. Interacts with GajA; 2 GajB dimers dock at opposite sides of the GajA complex to form a 4:4 GajA-GajB assembly (GajAB). GajAB interacts with Bacillus phage Phi3T Gad1 protein; this interaction forms a 4:4:8 GajAB-Gad1 complex and leads to GajAB inhibition.

In terms of biological role, component of antiviral defense system Gabija type II, composed of GajA and GajB. Expression of Gabija type II in B.subtilis (strain BEST7003) confers resistance to phages phi105, and SpBeta. May be a helicase or contribute to GajA activation. The protein is Gabija protein GajB of Bacillus cereus (strain HuB5-5).